Consider the following 549-residue polypeptide: Hydroxylamine reductase (549 aa).

C3, C6, C18, and C25 together coordinate [2Fe-2S] cluster. Residues H248, E272, C316, C404, C432, C457, E491, and K493 each contribute to the hybrid [4Fe-2O-2S] cluster site. Cysteine persulfide is present on C404.

Belongs to the HCP family. [2Fe-2S] cluster serves as cofactor. Hybrid [4Fe-2O-2S] cluster is required as a cofactor.

Its subcellular location is the cytoplasm. It carries out the reaction A + NH4(+) + H2O = hydroxylamine + AH2 + H(+). In terms of biological role, catalyzes the reduction of hydroxylamine to form NH(3) and H(2)O. The sequence is that of Hydroxylamine reductase from Aeromonas hydrophila subsp. hydrophila (strain ATCC 7966 / DSM 30187 / BCRC 13018 / CCUG 14551 / JCM 1027 / KCTC 2358 / NCIMB 9240 / NCTC 8049).